Consider the following 313-residue polypeptide: ADP-L-glycero-D-manno-heptose-6-epimerase (313 aa).

Residues 10 to 11 (MI), 31 to 32 (DN), Lys-38, Lys-53, 75 to 79 (EGACS), and Asn-92 contribute to the NADP(+) site. The Proton acceptor role is filled by Tyr-139. Lys-143 contributes to the NADP(+) binding site. Asn-174 is a binding site for substrate. Positions 175 and 183 each coordinate NADP(+). Residue Lys-183 is the Proton acceptor of the active site. Residues Ser-185, His-192, 206–209 (FEGS), Arg-214, and Tyr-277 contribute to the substrate site.

It belongs to the NAD(P)-dependent epimerase/dehydratase family. HldD subfamily. As to quaternary structure, homopentamer. The cofactor is NADP(+).

The enzyme catalyses ADP-D-glycero-beta-D-manno-heptose = ADP-L-glycero-beta-D-manno-heptose. It participates in nucleotide-sugar biosynthesis; ADP-L-glycero-beta-D-manno-heptose biosynthesis; ADP-L-glycero-beta-D-manno-heptose from D-glycero-beta-D-manno-heptose 7-phosphate: step 4/4. Catalyzes the interconversion between ADP-D-glycero-beta-D-manno-heptose and ADP-L-glycero-beta-D-manno-heptose via an epimerization at carbon 6 of the heptose. This Aliivibrio fischeri (strain MJ11) (Vibrio fischeri) protein is ADP-L-glycero-D-manno-heptose-6-epimerase.